The following is a 105-amino-acid chain: Endogenous retrovirus group K member 16 Rec protein (105 aa).

Residues 1-41 (MNPSEMQRKAPPRRRRHRNRAPSSHKMNKMMMSEEQMKLPS) are disordered. Residues 10 to 20 (APPRRRRHRNR) show a composition bias toward basic residues. The Nuclear localization signal motif lies at 13-20 (RRRRHRNR). Positions 50-59 (WAQLNKLTQL) match the Nuclear export signal motif.

Forms homodimers, homotrimers, and homotetramers via a C-terminal domain. Associates with XPO1 and with ZNF145.

The protein localises to the cytoplasm. The protein resides in the nucleus. Its subcellular location is the nucleolus. In terms of biological role, retroviral replication requires the nuclear export and translation of unspliced, singly-spliced and multiply-spliced derivatives of the initial genomic transcript. Rec interacts with a highly structured RNA element (RcRE) present in the viral 3'LTR and recruits the cellular nuclear export machinery. This permits export to the cytoplasm of unspliced genomic or incompletely spliced subgenomic viral transcripts. This is Endogenous retrovirus group K member 16 Rec protein (ERVK-16) from Homo sapiens (Human).